Consider the following 446-residue polypeptide: Serine--tRNA ligase, mitochondrial (446 aa).

251 to 253 (TAE) is a binding site for L-serine. ATP contacts are provided by residues 284-286 (RAE) and Val300. L-serine is bound at residue Glu307. ATP is bound at residue 371–374 (EISS). Residue Thr407 participates in L-serine binding.

It belongs to the class-II aminoacyl-tRNA synthetase family. Type-1 seryl-tRNA synthetase subfamily. In terms of assembly, homodimer. The tRNA molecule binds across the dimer.

The protein localises to the mitochondrion matrix. It carries out the reaction tRNA(Ser) + L-serine + ATP = L-seryl-tRNA(Ser) + AMP + diphosphate + H(+). Its function is as follows. Catalyzes the attachment of serine to tRNA(Ser). This Saccharomyces cerevisiae (strain ATCC 204508 / S288c) (Baker's yeast) protein is Serine--tRNA ligase, mitochondrial (DIA4).